Here is a 400-residue protein sequence, read N- to C-terminus: Elongation factor Tu (400 aa).

A tr-type G domain is found at lysine 10–glutamate 209. The tract at residues glycine 19–threonine 26 is G1. Glycine 19–threonine 26 is a GTP binding site. A Mg(2+)-binding site is contributed by threonine 26. Positions glycine 60 to asparagine 64 are G2. The segment at aspartate 81–glycine 84 is G3. GTP contacts are provided by residues aspartate 81–histidine 85 and asparagine 136–aspartate 139. Residues asparagine 136 to aspartate 139 form a G4 region. The tract at residues serine 174–leucine 176 is G5.

Belongs to the TRAFAC class translation factor GTPase superfamily. Classic translation factor GTPase family. EF-Tu/EF-1A subfamily. Monomer.

It localises to the cytoplasm. It carries out the reaction GTP + H2O = GDP + phosphate + H(+). GTP hydrolase that promotes the GTP-dependent binding of aminoacyl-tRNA to the A-site of ribosomes during protein biosynthesis. The sequence is that of Elongation factor Tu from Heliobacterium modesticaldum (strain ATCC 51547 / Ice1).